Consider the following 607-residue polypeptide: Bifunctional lysine-specific demethylase and histidyl-hydroxylase NO66 (607 aa).

Disordered regions lie at residues 23 to 121 (GPTI…IKTN) and 139 to 184 (ATQH…GEVE). A compositionally biased stretch (polar residues) spans 25 to 37 (TIQQTGATKTPKT). Basic residues predominate over residues 39 to 58 (SKIRRLSIRKSTRKIKHALK). The segment covering 156–167 (DKTPVKRVRSDT) has biased composition (basic and acidic residues). A JmjC domain is found at 188-405 (EEAEKMFEWL…DLMEKLVPAA (218 aa)). Fe cation is bound by residues histidine 328, aspartate 330, and histidine 371.

The protein belongs to the ROX family. NO66 subfamily. The cofactor is Fe(2+).

The protein localises to the nucleus. The enzyme catalyses L-histidyl-[protein] + 2-oxoglutarate + O2 = (3S)-3-hydroxy-L-histidyl-[protein] + succinate + CO2. It carries out the reaction N(6),N(6)-dimethyl-L-lysyl(36)-[histone H3] + 2 2-oxoglutarate + 2 O2 = L-lysyl(36)-[histone H3] + 2 formaldehyde + 2 succinate + 2 CO2. Functionally, oxygenase that can act as both a histone lysine demethylase and a ribosomal histidine hydroxylase. Specifically demethylates 'Lys-4' (H3K4me) and 'Lys-36' (H3K36me) of histone H3, thereby playing a central role in histone code. Also catalyzes the hydroxylation of 60S ribosomal protein L8. This is Bifunctional lysine-specific demethylase and histidyl-hydroxylase NO66 from Branchiostoma floridae (Florida lancelet).